A 305-amino-acid polypeptide reads, in one-letter code: Hepatitis A virus cellular receptor 1 homolog (305 aa).

Residues 1–21 (MNQIQVFISGLILLLPGAVDS) form the signal peptide. An Ig-like V-type domain is found at 22–122 (YVEVKGVVGH…PGWFNDQKVT (101 aa)). At 22–237 (YVEVKGVVGH…GKPQKNPTKG (216 aa)) the chain is on the extracellular side. 3 disulfide bridges follow: C37–C108, C49–C60, and C55–C107. Residues 129–185 (PEIPTRPPTRPTTTRPTATGRPTTISTRSTHVPTSIRVSTSTPPTSTHTWTHKPEPT) are disordered. 2 stretches are compositionally biased toward low complexity: residues 139–152 (PTTTRPTATGRPTT) and 161–177 (PTSIRVSTSTPPTSTHT). A glycan (N-linked (GlcNAc...) asparagine) is linked at N208. A helical membrane pass occupies residues 238 to 258 (FYVGICIAALLLLLLVSTVAI). The Cytoplasmic portion of the chain corresponds to 259–305 (TRYILMKRKSASLSVVAFRVSKIEALQNAAVVHSRAEDNIYIVEDRP).

Belongs to the immunoglobulin superfamily. TIM family. Interacts with STAM. Interacts with SELPLG. As to expression, expressed by stimulated T-cells. Expressed during primary antigen stimulation. Expressed at higher levels on B rather than T-cells, both constitutively and after activation.

It is found in the cell membrane. Phosphatidylserine receptor that plays an important functional role in regulatory B-cells homeostasis including generation, expansion and suppressor functions. As P-selectin/SELPLG ligand, plays a specialized role in activated but not naive T-cell trafficking during inflammatory responses. Controls thereby T-cell accumulation in the inflamed central nervous system (CNS) and the induction of autoimmune disease. Also regulates expression of various anti-inflammatory cytokines and co-inhibitory ligands including IL10. Acts as a regulator of T-cell proliferation. May play a role in kidney injury and repair. This is Hepatitis A virus cellular receptor 1 homolog (Havcr1) from Mus musculus (Mouse).